Reading from the N-terminus, the 137-residue chain is Methylmalonyl-CoA decarboxylase subunit delta (137 aa).

Residues 30-50 traverse the membrane as a helical segment; the sequence is VTVVLGMGITVVALIFLMYII.

This sequence belongs to the OadG family. The methylmalonyl-CoA decarboxylase is composed of four subunits: the carboxyltransferase alpha subunit (MmdA), the tunnel beta subunit (MmdB), the biotin-containing gamma subunit (MmdC) and the delta subunit (MmdD).

The protein resides in the cell membrane. It catalyses the reaction (S)-methylmalonyl-CoA + Na(+)(in) + H(+)(out) = propanoyl-CoA + Na(+)(out) + CO2. Subunit of the sodium ion pump methylmalonyl-CoA decarboxylase, which converts the chemical energy of a decarboxylation reaction into an electrochemical gradient of Na(+) ions across the cytoplasmic membrane, thereby creating a sodium ion motive force that is used for ATP synthesis. The delta subunit is required for catalytic activity as well as for the proper assembly of the individual subunits to an enzyme complex. In Propionigenium modestum, this protein is Methylmalonyl-CoA decarboxylase subunit delta.